Consider the following 471-residue polypeptide: Eukaryotic translation initiation factor 3 subunit M (471 aa).

A disordered region spans residues 39–61; it reads EISSLLEPLRQQEQSEEEPDRKQ. Positions 206–377 constitute a PCI domain; it reads DFELAQSHVV…SEFLVHRATY (172 aa). The disordered stretch occupies residues 419–471; the sequence is QAATEEANQGKSGEKGGKGGDRRRNPQHQQQQQQSQPSQPQQPRETELVAGAE. Residues 430-442 are compositionally biased toward basic and acidic residues; sequence SGEKGGKGGDRRR. A compositionally biased stretch (low complexity) spans 445 to 461; the sequence is QHQQQQQQSQPSQPQQP.

The protein belongs to the eIF-3 subunit M family. Component of the eukaryotic translation initiation factor 3 (eIF-3) complex.

It is found in the cytoplasm. Its function is as follows. Component of the eukaryotic translation initiation factor 3 (eIF-3) complex, which is involved in protein synthesis of a specialized repertoire of mRNAs and, together with other initiation factors, stimulates binding of mRNA and methionyl-tRNAi to the 40S ribosome. The eIF-3 complex specifically targets and initiates translation of a subset of mRNAs involved in cell proliferation. In Aspergillus clavatus (strain ATCC 1007 / CBS 513.65 / DSM 816 / NCTC 3887 / NRRL 1 / QM 1276 / 107), this protein is Eukaryotic translation initiation factor 3 subunit M.